A 139-amino-acid polypeptide reads, in one-letter code: Small ribosomal subunit protein uS11 (139 aa).

Residues 1–33 are disordered; the sequence is MPPAKKGPATSARKGQKTRRREKKNVPHGAAHI. The span at 14 to 23 shows a compositional bias: basic residues; sequence KGQKTRRREK.

It belongs to the universal ribosomal protein uS11 family. As to quaternary structure, part of the 30S ribosomal subunit. Interacts with proteins S7 and S18. Binds to IF-3.

Its function is as follows. Located on the platform of the 30S subunit, it bridges several disparate RNA helices of the 16S rRNA. Forms part of the Shine-Dalgarno cleft in the 70S ribosome. The sequence is that of Small ribosomal subunit protein uS11 from Mycobacterium bovis (strain ATCC BAA-935 / AF2122/97).